An 82-amino-acid chain; its full sequence is Small ribosomal subunit protein uS17 (82 aa).

It belongs to the universal ribosomal protein uS17 family. Part of the 30S ribosomal subunit.

Its function is as follows. One of the primary rRNA binding proteins, it binds specifically to the 5'-end of 16S ribosomal RNA. The chain is Small ribosomal subunit protein uS17 from Shewanella sediminis (strain HAW-EB3).